We begin with the raw amino-acid sequence, 216 residues long: Somatotropin (216 aa).

The signal sequence occupies residues Met1 to Ala26. His45 provides a ligand contact to Zn(2+). An intrachain disulfide couples Cys78 to Cys189. Phosphoserine is present on Ser131. Glu198 is a binding site for Zn(2+). The cysteines at positions 206 and 214 are disulfide-linked.

It belongs to the somatotropin/prolactin family.

The protein localises to the secreted. Plays an important role in growth control. Its major role in stimulating body growth is to stimulate the liver and other tissues to secrete IGF1. It stimulates both the differentiation and proliferation of myoblasts. It also stimulates amino acid uptake and protein synthesis in muscle and other tissues. In Equus caballus (Horse), this protein is Somatotropin (GH1).